The primary structure comprises 88 residues: Hemotin (88 aa).

The Lumenal portion of the chain corresponds to 1 to 14 (MDCFKVFEVVFQSE). A helical membrane pass occupies residues 15-37 (INPLLLIPAVATIALTLCCYCYH). Topologically, residues 38–88 (GYQWIRDRRTARIEEQQAQLPLPLSRISITPGCSMVATTKLTHSRNSVDIY) are cytoplasmic.

In terms of assembly, interacts with 14-3-3zeta. In terms of tissue distribution, expressed in hemocytes.

The protein localises to the early endosome membrane. Negatively regulates early endosome maturation by binding to and repressing the activity of 14-3-3zeta which prevents the 14-3-3zeta-mediated activation of phosphoinositide 3-kinase Pi3K68D. This, in turn, inhibits the Pi3K68D-mediated conversion of phosphatidylinositol to phosphatidylinositol-3-phosphate and prevents progression of early endosomes through the maturation process which regulates subsequent steps of phagocytic processing. The polypeptide is Hemotin (Drosophila melanogaster (Fruit fly)).